Reading from the N-terminus, the 768-residue chain is Cullin-3 (768 aa).

Position 2 is an N-acetylserine (Ser-2). An interaction with KLHL18 region spans residues 2 to 41 (SNLSKGTGSRKDTKMRIRAFPMTMDEKYVNSIWDLLKNAI). Ser-585 is modified (phosphoserine). Positions 677-698 (VAAKQGESDPERKETRQKVDDD) are disordered. Residues 682-698 (GESDPERKETRQKVDDD) are compositionally biased toward basic and acidic residues. Positions 698–760 (DRKHEIEAAI…REYLARTPED (63 aa)) constitute a Cullin neddylation domain. Residue Lys-712 forms a Glycyl lysine isopeptide (Lys-Gly) (interchain with G-Cter in NEDD8) linkage.

Belongs to the cullin family. In terms of assembly, forms neddylation-dependent homodimers. Component of multiple BCR (BTB-CUL3-RBX1) E3 ubiquitin-protein ligase complexes formed of CUL3, RBX1 and a variable BTB domain-containing protein acting as both, adapter to cullin and substrate recognition subunit. The BCR complex may be active as a heterodimeric complex, in which NEDD8, covalently attached to one CUL3 molecule, binds to the C-terminus of a second CUL3 molecule. Interacts with RBX1, RNF7, CYCE and TIP120A/CAND1. Part of the BCR(SPOP) containing SPOP, and of BCR containing homodimeric SPOPL or the heterodimer formed by SPOP and SPOPL. Part of the probable BCR(KLHL9-KLHL13) complex with BTB domain proteins KLHL9 and KLHL13. Part of the BCR(KLHL41) complex containing KLHL41. Component of the BCR(KLHL12) E3 ubiquitin ligase complex, at least composed of CUL3 and KLHL12 and RBX1. Component of the BCR(KLHL3) E3 ubiquitin ligase complex, at least composed of CUL3 and KLHL3 and RBX1. Part of the BCR(ENC1) complex containing ENC1. Part of a complex consisting of BMI1/PCGF4, CUL3 and SPOP. Part of a complex consisting of BRMS1, CUL3 and SPOP. Component of the BCR(KLHL21) E3 ubiquitin ligase complex, at least composed of CUL3, KLHL21 and RBX1. Component of the BCR(KLHL22) E3 ubiquitin ligase complex, at least composed of CUL3, KLHL22 and RBX1. Component of the BCR(KLHL25) E3 ubiquitin ligase complex, at least composed of CUL3, KLHL25 and RBX1. Part of a complex consisting of MACROH2A1, CUL3 and SPOP. Component of the BCR(KLHL42) E3 ubiquitin ligase complex, at least composed of CUL3 and KLHL42. Interacts with KLHL42 (via the BTB domain). Interacts with KATNA1; the interaction is enhanced by KLHL42. Component of the BCR(KBTBD8) E3 ubiquitin ligase complex, at least composed of CUL3, KBTBD8 and RBX1. Interacts with KCTD5, KLHL9, KLHL11, KLHL13, GAN, ZBTB16, KLHL3, KLHL15, KLHL20, KLHL36, GMCL2, BTBD1. Part of a complex that contains CUL3, RBX1 and GAN. Interacts (via BTB domain) with KLHL17; the interaction regulates surface GRIK2 expression. Interacts with KCTD7. Part of the BCR(GAN) complex containing GAN. Part of the BCR(KEAP1) complex containing KEAP1. Interacts with KLHL10. Interacts with KAT5 and ATF2. Interacts with KCTD17 in the BCR(KCTD17) E3 ubiquitin ligase complex, at least composed of CUL3, KCTD17 and RBX1. Interacts (when neddylated) with ARIH1; leading to activate the E3 ligase activity of ARIH1. Interacts with COPS9 isoform 2. Interacts with PPP2R5B; this interaction is indirect and mediated through KLHL15-binding and leads to PPP2R5B proteasomal degradation. Interacts with RBBP8/CtIP; this interaction is indirect and mediated through KLHL15-binding and leads to RBBP8 proteasomal degradation. Interacts with KLHL24 in the BCR(KLHL24) E3 ubiquitin ligase complex, composed of CUL3, RBX1 and KLHL24. Interacts with RHOBTB2. Interacts with AURKA and KLHL18 (via BTB domain). Interacts (unneddylated form) with DCUN1D1, DCUN1D2, DCUN1D3, DCUN1D4 and DCUN1D5; these interactions promote the cullin neddylation. Component of a BCR3 (BTB-CUL3-RBX1) E3 ubiquitin ligase complex, also named Cul3-RING ubiquitin ligase complex CUL3(KBTBD6/7), composed of CUL3, RBX1, KBTBD6 and KBTBD7. Component of the BCR(KBTBD2) E3 ubiquitin ligase complex, at least composed of CUL3, KBTBD2 and RBX1. Interacts with KBTBD2 (via the BTB domain). Component of the BCR(KBTBD4) E3 ubiquitin ligase complex, at least composed of CUL3, KBTBD4 and RBX1. Component of the BCR(ARMC5) E3 ubiquitin ligase complex, composed of CUL3, ARMC5 and RBX1. Post-translationally, neddylated. Attachment of NEDD8 is required for the E3 ubiquitin-protein ligase activity of the BCR complex. Deneddylated via its interaction with the COP9 signalosome (CSN) complex. In terms of tissue distribution, brain, spermatozoa, and testis (at protein level). Widely expressed.

The protein resides in the nucleus. It is found in the golgi apparatus. The protein localises to the cell projection. It localises to the cilium. Its subcellular location is the flagellum. The protein resides in the cytoplasm. It is found in the cytoskeleton. The protein localises to the spindle. It localises to the microtubule organizing center. Its subcellular location is the centrosome. The protein resides in the spindle pole. It participates in protein modification; protein ubiquitination. Its function is as follows. Core component of multiple cullin-RING-based BCR (BTB-CUL3-RBX1) E3 ubiquitin-protein ligase complexes which mediate the ubiquitination and subsequent proteasomal degradation of target proteins. BCR complexes and ARIH1 collaborate in tandem to mediate ubiquitination of target proteins. As a scaffold protein may contribute to catalysis through positioning of the substrate and the ubiquitin-conjugating enzyme. The E3 ubiquitin-protein ligase activity of the complex is dependent on the neddylation of the cullin subunit and is inhibited by the association of the deneddylated cullin subunit with TIP120A/CAND1. The functional specificity of the BCR complex depends on the BTB domain-containing protein as the substrate recognition component. BCR(KLHL42) is involved in ubiquitination of KATNA1. BCR(SPOP) is involved in ubiquitination of BMI1/PCGF4, BRMS1, MACROH2A1 and DAXX, GLI2 and GLI3. Can also form a cullin-RING-based BCR (BTB-CUL3-RBX1) E3 ubiquitin-protein ligase complex containing homodimeric SPOPL or the heterodimer formed by SPOP and SPOPL; these complexes have lower ubiquitin ligase activity. BCR(KLHL9-KLHL13) controls the dynamic behavior of AURKB on mitotic chromosomes and thereby coordinates faithful mitotic progression and completion of cytokinesis. BCR(KLHL12) is involved in ER-Golgi transport by regulating the size of COPII coats, thereby playing a key role in collagen export, which is required for embryonic stem (ES) cells division: BCR(KLHL12) acts by mediating monoubiquitination of SEC31 (SEC31A or SEC31B). BCR(KLHL3) acts as a regulator of ion transport in the distal nephron; by mediating ubiquitination of WNK4. The BCR(KLHL20) E3 ubiquitin ligase complex is involved in interferon response and anterograde Golgi to endosome transport: it mediates both ubiquitination leading to degradation and 'Lys-33'-linked ubiquitination. The BCR(KLHL21) E3 ubiquitin ligase complex regulates localization of the chromosomal passenger complex (CPC) from chromosomes to the spindle midzone in anaphase and mediates the ubiquitination of AURKB. The BCR(KLHL22) ubiquitin ligase complex mediates monoubiquitination of PLK1, leading to PLK1 dissociation from phosphoreceptor proteins and subsequent removal from kinetochores, allowing silencing of the spindle assembly checkpoint (SAC) and chromosome segregation. The BCR(KLHL22) ubiquitin ligase complex is also responsible for the amino acid-stimulated 'Lys-48' polyubiquitination and proteasomal degradation of DEPDC5. Through the degradation of DEPDC5, releases the GATOR1 complex-mediated inhibition of the TORC1 pathway. The BCR(KLHL25) ubiquitin ligase complex is involved in translational homeostasis by mediating ubiquitination and subsequent degradation of hypophosphorylated EIF4EBP1 (4E-BP1). The BCR(KLHL25) ubiquitin ligase complex is also involved in lipid synthesis by mediating ubiquitination and degradation of ACLY. The BCR(KBTBD8) complex acts by mediating monoubiquitination of NOLC1 and TCOF1, leading to remodel the translational program of differentiating cells in favor of neural crest specification. Involved in ubiquitination of cyclin E and of cyclin D1 (in vitro) thus involved in regulation of G1/S transition. Involved in the ubiquitination of KEAP1, ENC1 and KLHL41. In concert with ATF2 and RBX1, promotes degradation of KAT5 thereby attenuating its ability to acetylate and activate ATM. The BCR(KCTD17) E3 ubiquitin ligase complex mediates ubiquitination and degradation of TCHP, a down-regulator of cilium assembly, thereby inducing ciliogenesis. The BCR(KLHL24) E3 ubiquitin ligase complex mediates ubiquitination of KRT14, controls KRT14 levels during keratinocytes differentiation, and is essential for skin integrity. The BCR(KLHL18) E3 ubiquitin ligase complex mediates the ubiquitination of AURKA leading to its activation at the centrosome which is required for initiating mitotic entry. The BCR(KEAP1) E3 ubiquitin ligase complex acts as a key sensor of oxidative and electrophilic stress by mediating ubiquitination and degradation of NFE2L2/NRF2, a transcription factor regulating expression of many cytoprotective genes. As part of the CUL3(KBTBD6/7) E3 ubiquitin ligase complex functions mediates 'Lys-48' ubiquitination and proteasomal degradation of TIAM1. By controlling the ubiquitination of that RAC1 guanine exchange factors (GEF), regulates RAC1 signal transduction and downstream biological processes including the organization of the cytoskeleton, cell migration and cell proliferation. The BCR(KBTBD4) E3 ubiquitin ligase complex targets CoREST corepressor complex components RCOR1, KDM1A/LSD1 and HDAC2 for proteasomal degradation with RCOR1 likely to be the primary target while degradation of KDM1A and HDAC2 is likely due to their association with RCOR1. It also targets RCOR3, MIER2 and MIER3 for proteasomal degradation as well as associated proteins ZNF217 and RREB1 with degradation being dependent on the presence of an ELM2 domain in the target proteins. The BCR(ARMC5) complex mediates premature transcription termination of transcripts that are unfavorably configured for transcriptional elongation by mediating ubiquitination of Pol II subunit POLR2A. Required for 'Lys-63'-linked ubiquitination of large ribosomal subunit protein MRPL12. This chain is Cullin-3, found in Homo sapiens (Human).